The sequence spans 313 residues: PGR5-like protein 1B, chloroplastic (313 aa).

A chloroplast-targeting transit peptide spans 1–49; the sequence is MAFTLTIPRFSAISRKPITCSSSRTQCPAPFTHGRSISLRRRLTLLPLK. Residue Ala-50 is modified to N-acetylalanine. The Stromal segment spans residues 50 to 187; that stretch reads ASTDQSGQVG…KVYSDLAIDY (138 aa). A disulfide bridge links Cys-71 with Cys-172. A helical membrane pass occupies residues 188 to 208; the sequence is FKMFLLNVPATVVALGLFFFL. The Lumenal, thylakoid portion of the chain corresponds to 209-225; it reads DDITGFEITYLLELPEP. The chain crosses the membrane as a helical span at residues 226–246; that stretch reads FSFIFTWFAAVPAIVYLALSL. The Stromal segment spans residues 247-313; the sequence is TKLILKDFLI…LITLPEGGKA (67 aa).

This sequence belongs to the PGR5 family. In terms of assembly, homodimer and heterodimer with PGR5. Interacts with PGR5, FD2, psaD1, LFNR1 and LFNR2. Also interacts with petC and a Fe-containing cofactor (FCC). Disulfide bonds; Cys-289 and Cys-292 are probably involved in the formation of disulfide bridges with 'Cys-11' and 'Cys-105' of PGR5 while Cys-261 and Cys-264 are probably involved in the binding of a Fe-containing cofactor (FCC).

It localises to the plastid. It is found in the chloroplast thylakoid membrane. With respect to regulation, inhibited by antimycin A. Its function is as follows. Ferredoxin-plastoquinone reductase involved in cyclic electron flow (CEF) around photosystem I. The homodimer is probably not involved in CEF. The polypeptide is PGR5-like protein 1B, chloroplastic (PGRL1B) (Arabidopsis thaliana (Mouse-ear cress)).